The sequence spans 426 residues: Actin-like protein 6B (426 aa).

An essential for mediating its function in dendritic development; may contribute to neuronal-specific targeting region spans residues 39 to 82; that stretch reads TTVGLLAAEEGGGLELEGEKEKKGKIFHIDTNALHVPRDGAEVM.

The protein belongs to the actin family. As to quaternary structure, component of the multiprotein chromatin-remodeling complexes SWI/SNF: SWI/SNF-A (BAF), SWI/SNF-B (PBAF) and related complexes. The canonical complex contains a catalytic subunit (either SMARCA4/BRG1/BAF190A or SMARCA2/BRM/BAF190B) and at least SMARCE1, ACTL6A/BAF53, SMARCC1/BAF155, SMARCC2/BAF170, and SMARCB1/SNF5/BAF47. Other subunits specific to each of the complexes may also be present permitting several possible combinations developmentally and tissue specific. Component of the BAF complex, which includes at least actin (ACTB), ARID1A/BAF250A, ARID1B/BAF250B, SMARCA2/BRM, SMARCA4/BRG1/BAF190A, ACTL6A/BAF53, ACTL6B/BAF53B, SMARCE1/BAF57, SMARCC1/BAF155, SMARCC2/BAF170, SMARCB1/SNF5/INI1, and one or more SMARCD1/BAF60A, SMARCD2/BAF60B, or SMARCD3/BAF60C. Component of neuron-specific chromatin remodeling complex (nBAF complex) composed of at least, ARID1A/BAF250A or ARID1B/BAF250B, SMARCD1/BAF60A or SMARCD2/BAF60B or SMARCD3/BAF60C, SMARCA2/BRM/BAF190B, SMARCA4/BRG1/BAF190A, SMARCB1/BAF47, SMARCC1/BAF155, SMARCE1/BAF57, SMARCC2/BAF170, DPF1/BAF45B, DPF3/BAF45C, ACTL6B/BAF53B and actin (ACTB). Note that the nBAF complex is polymorphic in regard to the ATPase, SMARCA2 and SMARCA4 occupying mutually exclusive positions. May be a component of the SWI/SNF-B (PBAF) chromatin remodeling complex, at least composed of SMARCA4/BRG1, SMARCB1/BAF47/SNF5, ACTL6A/BAF53A or ACTL6B/BAF53B, SMARCE1/BAF57, SMARCD1/BAF60A, SMARCD2/BAF60B, perhaps SMARCD3/BAF60C, SMARCC1/BAF155, SMARCC2/BAF170, PBRM1/BAF180, ARID2/BAF200 and actin.

Its subcellular location is the nucleus. Functionally, involved in transcriptional activation and repression of select genes by chromatin remodeling (alteration of DNA-nucleosome topology). Component of SWI/SNF chromatin remodeling complexes that carry out key enzymatic activities, changing chromatin structure by altering DNA-histone contacts within a nucleosome in an ATP-dependent manner. Belongs to the neuron-specific chromatin remodeling complex (nBAF complex), as such plays a role in remodeling mononucleosomes in an ATP-dependent fashion, and is required for postmitotic neural development and dendritic outgrowth. During neural development a switch from a stem/progenitor to a postmitotic chromatin remodeling mechanism occurs as neurons exit the cell cycle and become committed to their adult state. The transition from proliferating neural stem/progenitor cells to postmitotic neurons requires a switch in subunit composition of the npBAF and nBAF complexes. As neural progenitors exit mitosis and differentiate into neurons, npBAF complexes which contain ACTL6A/BAF53A and PHF10/BAF45A, are exchanged for homologous alternative ACTL6B/BAF53B and DPF1/BAF45B or DPF3/BAF45C subunits in neuron-specific complexes (nBAF). The npBAF complex is essential for the self-renewal/proliferative capacity of the multipotent neural stem cells. The nBAF complex along with CREST plays a role regulating the activity of genes essential for dendrite growth. ACTL6B/BAF53B is not essential for assembly of the nBAF complex but is required for targeting the complex and CREST to the promoter of genes essential for dendritic growth. Essential for neuronal maturation and dendrite development. The sequence is that of Actin-like protein 6B (ACTL6B) from Bos taurus (Bovine).